The sequence spans 384 residues: Histidinol-phosphate aminotransferase (384 aa).

The residue at position 223 (K223) is an N6-(pyridoxal phosphate)lysine.

This sequence belongs to the class-II pyridoxal-phosphate-dependent aminotransferase family. Pyridoxal 5'-phosphate is required as a cofactor.

The catalysed reaction is L-histidinol phosphate + 2-oxoglutarate = 3-(imidazol-4-yl)-2-oxopropyl phosphate + L-glutamate. It functions in the pathway amino-acid biosynthesis; L-histidine biosynthesis; L-histidine from 5-phospho-alpha-D-ribose 1-diphosphate: step 7/9. This Schizosaccharomyces pombe (strain 972 / ATCC 24843) (Fission yeast) protein is Histidinol-phosphate aminotransferase (his3).